The chain runs to 310 residues: MSTNTEIIKNSDLQSLINDKRRLINEIKDFNKSIKPLEFESYQDYFLIKTFKKGISASGHVDIDSLRNKEYGIYYKKIKRNSTQEVGEPIPRNTSSSSSSTRSNSSADISDTEYSGENTPTTTGAASRRRRTRSRAIQRENSLPASLPSISEANANNDDVTISEINGSELPFPIPISEVENIDIASDITERDGIRRRSSRISERDKRRSQSRLGSEEDEEGDGHDGDEGETKIQDLYESLVPKILESRRRSDWILPPKARYTPEKQMRTKPSFKSIKINELVGNKRIRSILSRFEGGVAGIRKRDWDSTQ.

Disordered stretches follow at residues 83 to 155 (TQEV…EANA) and 192 to 230 (DGIR…DEGE). Over residues 92–106 (RNTSSSSSSTRSNSS) the composition is skewed to low complexity. The segment covering 107 to 120 (ADISDTEYSGENTP) has biased composition (polar residues). A compositionally biased stretch (basic residues) spans 127–136 (SRRRRTRSRA). Polar residues predominate over residues 139-155 (RENSLPASLPSISEANA). Residues 192 to 208 (DGIRRRSSRISERDKRR) show a composition bias toward basic and acidic residues. Ser215 bears the Phosphoserine mark.

As to quaternary structure, interacts directly with HST1 and SUM1. Required for the interaction between HST1 and SUM1.

Its subcellular location is the nucleus. Functionally, tethering factor required for histone deacetylase HST1-mediated repression. Probably involved in targeting HST1 to a subset of SUM1-regulated genes. This chain is Repression factor of MSEs protein 1 (RFM1), found in Saccharomyces cerevisiae (strain ATCC 204508 / S288c) (Baker's yeast).